The following is a 689-amino-acid chain: Glycine--tRNA ligase beta subunit (689 aa).

It belongs to the class-II aminoacyl-tRNA synthetase family. As to quaternary structure, tetramer of two alpha and two beta subunits.

The protein resides in the cytoplasm. The enzyme catalyses tRNA(Gly) + glycine + ATP = glycyl-tRNA(Gly) + AMP + diphosphate. This chain is Glycine--tRNA ligase beta subunit, found in Klebsiella pneumoniae (strain 342).